A 355-amino-acid chain; its full sequence is Uroporphyrinogen decarboxylase (355 aa).

Substrate contacts are provided by residues R27–R31, D77, Y154, T209, and H327.

It belongs to the uroporphyrinogen decarboxylase family. In terms of assembly, homodimer.

It is found in the cytoplasm. It carries out the reaction uroporphyrinogen III + 4 H(+) = coproporphyrinogen III + 4 CO2. It participates in porphyrin-containing compound metabolism; protoporphyrin-IX biosynthesis; coproporphyrinogen-III from 5-aminolevulinate: step 4/4. Catalyzes the decarboxylation of four acetate groups of uroporphyrinogen-III to yield coproporphyrinogen-III. The protein is Uroporphyrinogen decarboxylase of Erwinia tasmaniensis (strain DSM 17950 / CFBP 7177 / CIP 109463 / NCPPB 4357 / Et1/99).